Here is a 156-residue protein sequence, read N- to C-terminus: Oxidized purine nucleoside triphosphate hydrolase (156 aa).

One can recognise a Nudix hydrolase domain in the interval 3–132; it reads ASRLYTLVLV…WFPLLLQKKK (130 aa). T8 is a 2-oxo-dATP binding site. Residues T8 and K23 each contribute to the 8-oxo-dGMP site. Residues T8 and K23 each coordinate 8-oxo-dGTP. The N(6)-methyl-AMP site is built by T8 and K23. 2 residues coordinate O(6)-methyl-dGMP: T8 and K23. F27 lines the 8-oxo-ATP pocket. 2-oxo-dATP is bound by residues N33 and 35-38; that span reads FGGK. N33 contributes to the 8-oxo-dGMP binding site. 8-oxo-dGTP-binding positions include N33 and 35 to 38; that span reads FGGK. Residue N33 participates in O(6)-methyl-dGMP binding. Residues 35–38 and E52 contribute to the 8-oxo-ATP site; that span reads FGGK. The Mg(2+) site is built by G36, E52, E55, E56, and E100. The Nudix box motif lies at 37 to 58; the sequence is GKVQEGETIEDGARRELQEESG. E56 is a binding site for 8-oxo-ATP. 117-120 contributes to the 2-oxo-dATP binding site; it reads WPDD. Residue 117–120 participates in 8-oxo-dGMP binding; it reads WPDD. Position 117–120 (117–120) interacts with 8-oxo-dGTP; that stretch reads WPDD. Residue 117 to 120 coordinates N(6)-methyl-AMP; the sequence is WPDD. Residue 117–120 coordinates O(6)-methyl-dGMP; sequence WPDD. 8-oxo-ATP is bound at residue 117–120; that stretch reads WPDD.

Belongs to the Nudix hydrolase family. Monomer. Mg(2+) is required as a cofactor. The N-terminus is blocked. Widely expressed with highest expression in thymus, testis, embryo and proliferating blood lymphocytes.

It localises to the cytoplasm. The protein localises to the cytosol. The protein resides in the mitochondrion matrix. Its subcellular location is the nucleus. It carries out the reaction 2-oxo-dATP + H2O = 2-oxo-dAMP + diphosphate + H(+). The enzyme catalyses 2-oxo-ATP + H2O = 2-oxo-AMP + diphosphate + H(+). The catalysed reaction is 8-oxo-dGTP + H2O = 8-oxo-dGMP + diphosphate + H(+). It catalyses the reaction 8-oxo-dATP + H2O = 8-oxo-dAMP + diphosphate + H(+). It carries out the reaction O(6)-methyl-dGTP + H2O = O(6)-methyl-dGMP + diphosphate + H(+). The enzyme catalyses N(6)-methyl-dATP + H2O = N(6)-methyl-dAMP + diphosphate + H(+). The catalysed reaction is N(6)-methyl-ATP + H2O = N(6)-methyl-AMP + diphosphate + H(+). Inhibited by 2-oxo-dADP and 8-oxo-dGDP. Its function is as follows. Oxidized purine nucleoside triphosphate hydrolase which is a prominent sanitizer of the oxidized nucleotide pool. Catalyzes the hydrolysis of 2-oxo-dATP (2-hydroxy-dATP) into 2-oxo-dAMP. Also has a significant hydrolase activity toward 2-oxo-ATP, 8-oxo-dGTP and 8-oxo-dATP. Through the hydrolysis of oxidized purine nucleoside triphosphates, prevents their incorporation into DNA and the subsequent transversions A:T to C:G and G:C to T:A. Also catalyzes the hydrolysis of methylated purine nucleoside triphosphate preventing their integration into DNA. Through this antimutagenic activity protects cells from oxidative stress. This is Oxidized purine nucleoside triphosphate hydrolase (NUDT1) from Homo sapiens (Human).